We begin with the raw amino-acid sequence, 936 residues long: Isoleucine--tRNA ligase (936 aa).

A 'HIGH' region motif is present at residues 58–68 (PYANGRAHLGT). Glutamate 561 serves as a coordination point for L-isoleucyl-5'-AMP. A 'KMSKS' region motif is present at residues 602 to 606 (KMSKS). Lysine 605 is an ATP binding site. Zn(2+) is bound by residues cysteine 899, cysteine 902, cysteine 919, and cysteine 922.

It belongs to the class-I aminoacyl-tRNA synthetase family. IleS type 1 subfamily. As to quaternary structure, monomer. Zn(2+) is required as a cofactor.

It localises to the cytoplasm. It catalyses the reaction tRNA(Ile) + L-isoleucine + ATP = L-isoleucyl-tRNA(Ile) + AMP + diphosphate. Its function is as follows. Catalyzes the attachment of isoleucine to tRNA(Ile). As IleRS can inadvertently accommodate and process structurally similar amino acids such as valine, to avoid such errors it has two additional distinct tRNA(Ile)-dependent editing activities. One activity is designated as 'pretransfer' editing and involves the hydrolysis of activated Val-AMP. The other activity is designated 'posttransfer' editing and involves deacylation of mischarged Val-tRNA(Ile). The chain is Isoleucine--tRNA ligase from Coxiella burnetii (strain RSA 331 / Henzerling II).